We begin with the raw amino-acid sequence, 296 residues long: Glycine--tRNA ligase alpha subunit (296 aa).

Belongs to the class-II aminoacyl-tRNA synthetase family. In terms of assembly, tetramer of two alpha and two beta subunits.

The protein localises to the cytoplasm. The catalysed reaction is tRNA(Gly) + glycine + ATP = glycyl-tRNA(Gly) + AMP + diphosphate. This chain is Glycine--tRNA ligase alpha subunit, found in Exiguobacterium sibiricum (strain DSM 17290 / CCUG 55495 / CIP 109462 / JCM 13490 / 255-15).